Consider the following 144-residue polypeptide: Large ribosomal subunit protein uL15 (144 aa).

The disordered stretch occupies residues 1 to 51 (MRLNTIKPGAGSKSAGKRVGRGIGSGLGKTCGRGHKGQKSRAGGFHKVGFE). Gly residues predominate over residues 21 to 31 (RGIGSGLGKTC).

This sequence belongs to the universal ribosomal protein uL15 family. Part of the 50S ribosomal subunit.

Functionally, binds to the 23S rRNA. The polypeptide is Large ribosomal subunit protein uL15 (Azoarcus sp. (strain BH72)).